The following is a 283-amino-acid chain: Homeobox protein Hox-A9a (283 aa).

Disordered regions lie at residues 25 to 54 and 162 to 181; these read VPRYSAGPGHQHSRQPASIGDPHSELGTCS and EKDAVSSHTGDGVDTEEKPG. The segment at residues 216 to 275 is a DNA-binding region (homeobox); it reads TRKKRCPYTKHQILELEKEFLFNTYLTRDRRYEVARLLNLTERQVKIWFQNRRMKMKKFN.

This sequence belongs to the Abd-B homeobox family.

It localises to the nucleus. Functionally, sequence-specific transcription factor which is part of a developmental regulatory system that provides cells with specific positional identities on the anterior-posterior axis. This Takifugu rubripes (Japanese pufferfish) protein is Homeobox protein Hox-A9a (hoxa9a).